A 262-amino-acid chain; its full sequence is Hydroxyethylthiazole kinase (262 aa).

Met50 serves as a coordination point for substrate. ATP contacts are provided by Arg125 and Thr171. Residue Gly198 participates in substrate binding.

Belongs to the Thz kinase family. The cofactor is Mg(2+).

It carries out the reaction 5-(2-hydroxyethyl)-4-methylthiazole + ATP = 4-methyl-5-(2-phosphooxyethyl)-thiazole + ADP + H(+). It participates in cofactor biosynthesis; thiamine diphosphate biosynthesis; 4-methyl-5-(2-phosphoethyl)-thiazole from 5-(2-hydroxyethyl)-4-methylthiazole: step 1/1. In terms of biological role, catalyzes the phosphorylation of the hydroxyl group of 4-methyl-5-beta-hydroxyethylthiazole (THZ). This chain is Hydroxyethylthiazole kinase, found in Escherichia coli (strain SMS-3-5 / SECEC).